Here is a 347-residue protein sequence, read N- to C-terminus: HTH-type transcriptional regulator PhcA (347 aa).

Residues 1 to 61 enclose the HTH lysR-type domain; that stretch reads MVNVDTKLLV…IRVPHGLTPT (61 aa). The H-T-H motif DNA-binding region spans 21-40; sequence ATYVAEKMHMTAPAVSHSLG. The segment at 316 to 347 is disordered; that stretch reads PMHPPMLTDDSGKSGKTGKGDAEKEDESRLSV. The span at 325–347 shows a compositional bias: basic and acidic residues; it reads DSGKSGKTGKGDAEKEDESRLSV.

It belongs to the LysR transcriptional regulatory family.

Regulates the transcription of one or more of the genes involved in virulence. The chain is HTH-type transcriptional regulator PhcA (phcA) from Ralstonia nicotianae (strain ATCC BAA-1114 / GMI1000) (Ralstonia solanacearum).